A 163-amino-acid chain; its full sequence is Crossover junction endodeoxyribonuclease RuvC (163 aa).

Residues aspartate 4, glutamate 65, and aspartate 138 contribute to the active site. Mg(2+)-binding residues include aspartate 4, glutamate 65, and aspartate 138.

This sequence belongs to the RuvC family. Homodimer which binds Holliday junction (HJ) DNA. The HJ becomes 2-fold symmetrical on binding to RuvC with unstacked arms; it has a different conformation from HJ DNA in complex with RuvA. In the full resolvosome a probable DNA-RuvA(4)-RuvB(12)-RuvC(2) complex forms which resolves the HJ. Mg(2+) serves as cofactor.

It localises to the cytoplasm. The enzyme catalyses Endonucleolytic cleavage at a junction such as a reciprocal single-stranded crossover between two homologous DNA duplexes (Holliday junction).. Functionally, the RuvA-RuvB-RuvC complex processes Holliday junction (HJ) DNA during genetic recombination and DNA repair. Endonuclease that resolves HJ intermediates. Cleaves cruciform DNA by making single-stranded nicks across the HJ at symmetrical positions within the homologous arms, yielding a 5'-phosphate and a 3'-hydroxyl group; requires a central core of homology in the junction. The consensus cleavage sequence is 5'-(A/T)TT(C/G)-3'. Cleavage occurs on the 3'-side of the TT dinucleotide at the point of strand exchange. HJ branch migration catalyzed by RuvA-RuvB allows RuvC to scan DNA until it finds its consensus sequence, where it cleaves and resolves the cruciform DNA. The polypeptide is Crossover junction endodeoxyribonuclease RuvC (Corynebacterium diphtheriae (strain ATCC 700971 / NCTC 13129 / Biotype gravis)).